We begin with the raw amino-acid sequence, 558 residues long: Tektin-5 (558 aa).

Positions 347–381 (ISEETDVKNKLQTQLAKILQEIFQAENTIMLLERA) form a coiled coil.

Belongs to the tektin family. As to quaternary structure, microtubule inner protein component of sperm flagellar doublet microtubules. Interacts with TEKT3. In terms of processing, ubiquitinated, leading to its degradation. Deubiquitinated by USP16, promoting its stability. In terms of tissue distribution, specifically expressed in testis.

The protein resides in the cytoplasm. It localises to the cytoskeleton. It is found in the flagellum axoneme. Sperm-specific microtubule inner protein (MIP) part of the dynein-decorated doublet microtubules (DMTs) in flagellar axoneme. Forms an extensive interaction network in different conformations that reinforces the helix bundle composed by other tektin proteins (TEKT1 to TEKT4) and MIPs to anchor the tektin bundle onto the tubulin wall of A-tubule of the sperm flagellum. This Rattus norvegicus (Rat) protein is Tektin-5.